The primary structure comprises 360 residues: Peptide chain release factor 1 (360 aa).

N5-methylglutamine is present on Gln-235.

Belongs to the prokaryotic/mitochondrial release factor family. Methylated by PrmC. Methylation increases the termination efficiency of RF1.

It localises to the cytoplasm. Peptide chain release factor 1 directs the termination of translation in response to the peptide chain termination codons UAG and UAA. In Burkholderia mallei (strain NCTC 10247), this protein is Peptide chain release factor 1.